A 219-amino-acid polypeptide reads, in one-letter code: 7-cyano-7-deazaguanine synthase 2 (219 aa).

8–18 (YSGGMDSFTAL) lines the ATP pocket. Positions 185, 193, 196, and 199 each coordinate Zn(2+).

Belongs to the QueC family. Zn(2+) is required as a cofactor.

It carries out the reaction 7-carboxy-7-deazaguanine + NH4(+) + ATP = 7-cyano-7-deazaguanine + ADP + phosphate + H2O + H(+). It participates in purine metabolism; 7-cyano-7-deazaguanine biosynthesis. Its function is as follows. Catalyzes the ATP-dependent conversion of 7-carboxy-7-deazaguanine (CDG) to 7-cyano-7-deazaguanine (preQ(0)). The chain is 7-cyano-7-deazaguanine synthase 2 from Colwellia psychrerythraea (strain 34H / ATCC BAA-681) (Vibrio psychroerythus).